We begin with the raw amino-acid sequence, 199 residues long: Recombination protein RecR (199 aa).

Residues 57–72 (CSICGNITEDDPCVIC) form a C4-type zinc finger. Residues 80–176 (STVLVVEEAK…KVTRLAHGLS (97 aa)) form the Toprim domain.

Belongs to the RecR family.

Functionally, may play a role in DNA repair. It seems to be involved in an RecBC-independent recombinational process of DNA repair. It may act with RecF and RecO. The chain is Recombination protein RecR from Lactiplantibacillus plantarum (strain ATCC BAA-793 / NCIMB 8826 / WCFS1) (Lactobacillus plantarum).